Consider the following 853-residue polypeptide: Neural cell adhesion molecule 1 (853 aa).

Positions 1–19 (MLQTKNLIWTLFFLGTAVS) are cleaved as a signal peptide. 5 Ig-like C2-type domains span residues 20 to 111 (LQVD…ATVN), 116 to 205 (QKLM…KDIQ), 212 to 300 (PTVQ…ASIH), 307 to 412 (PKIT…LEVQ), and 415 to 500 (PKLQ…ESLE). Residues 20–719 (LQVDIVPSQG…NGSPTSGLST (700 aa)) are Extracellular-facing. 2 disulfide bridges follow: cysteine 41/cysteine 96 and cysteine 139/cysteine 189. Heparin is bound by residues 152-156 (KHKGR) and 161-165 (KKDVR). Asparagine 222 carries an N-linked (GlcNAc...) asparagine glycan. Residues cysteine 235 and cysteine 286 are joined by a disulfide bond. N-linked (GlcNAc...) asparagine glycosylation is found at asparagine 314, asparagine 346, asparagine 432, asparagine 458, and asparagine 487. Cysteine 328 and cysteine 394 are joined by a disulfide. Cysteine 435 and cysteine 488 are oxidised to a cystine. 2 Fibronectin type-III domains span residues 508–607 (TPSS…TQPV) and 609–704 (EPSA…SAQP). The chain crosses the membrane as a helical span at residues 720 to 737 (GAIVGILVVTFVLLLVAV). Residues 738–853 (DVTCYFLNKC…TQIKVNESKA (116 aa)) lie on the Cytoplasmic side of the membrane. The interval 764 to 853 (GAKGKDMEEG…TQIKVNESKA (90 aa)) is disordered. 2 stretches are compositionally biased toward basic and acidic residues: residues 766–807 (KGKD…HTEP) and 815–829 (EPEK…ETET). Serine 778 and serine 782 each carry phosphoserine. The span at 838–853 (TVPNDATQIKVNESKA) shows a compositional bias: polar residues.

As to quaternary structure, interacts with MDK. Found in a complex with SLC39A6, SLC39A10 and with NCAM1; this complex controls NCAM1 phosphorylation and integration into focal adhesion complexes during epithelial-tomesenchymal transition. Interacts with synaptic plasticity regulator PANTS. In terms of processing, polysialylated by ST8SIA2 and ST8SIA4. Polysialylation modulates cell interactions by confering both attractive and repulsive properties that are highly regulated by ST8SIA2 and ST8SIA4. Polysialylation is formed on a-2,3-linked sialic acid of core glycans.

The protein localises to the cell membrane. This protein is a cell adhesion molecule involved in neuron-neuron adhesion, neurite fasciculation, outgrowth of neurites, etc. The polypeptide is Neural cell adhesion molecule 1 (Bos taurus (Bovine)).